We begin with the raw amino-acid sequence, 125 residues long: Succinate dehydrogenase cytochrome b560 subunit (125 aa).

3 helical membrane-spanning segments follow: residues 29-49, 68-88, and 104-124; these read ISGVAMFTLIASPPLFLKLAT, ILPWFIVIISVIFLYHIINGI, and IIKDSNTLLALVFLIMLFKFI. His83 provides a ligand contact to heme.

This sequence belongs to the cytochrome b560 family. Forms part of complex II containing four subunits: a 70 kDa flavoprotein (FP), a 27 kDa iron-sulfur protein (IP), a cytochrome B and a membrane-anchoring protein. Requires heme as cofactor.

The protein localises to the mitochondrion inner membrane. The protein operates within carbohydrate metabolism; tricarboxylic acid cycle. Functionally, membrane-anchoring subunit of succinate dehydrogenase (SDH) that is involved in complex II of the mitochondrial electron transport chain and is responsible for transferring electrons from succinate to ubiquinone (coenzyme Q). This chain is Succinate dehydrogenase cytochrome b560 subunit (SDH3), found in Porphyra purpurea (Red seaweed).